Reading from the N-terminus, the 73-residue chain is Ocellatin-PT8 (73 aa).

An N-terminal signal peptide occupies residues 1–22 (MAFLKKSLFLVLFLGLVSLSIC). Residues 23-39 (DEEKRQDEDDDDDDDEE) constitute a propeptide that is removed on maturation.

Expressed by the skin glands.

The protein resides in the secreted. Has antibacterial activity against Gram-negative bacteria E.coli ATCC 25922 (MIC=60 uM), K.pneumoniae ATCC 700603 (MIC=240 uM) and S.choleraesuis ATCC 14028 (MIC=240 uM) and against Gram-positive bacterium S.aureus ATCC 29313 (MIC=240 uM). Shows no hemolytic activity and no cytotoxicity. The sequence is that of Ocellatin-PT8 from Leptodactylus pustulatus (Ceara white-lipped frog).